A 141-amino-acid polypeptide reads, in one-letter code: MEMLQGLLLLMLLSMGGTWASKEPLRPRCRPINATLAVEKEGCPVCITVNTTICAGYCPTMTRVLQSVLPPLPQVVCTYRDVRFESIWLPGCPRGVDPVVSYAVALSCHCGLCRRSTSDCGGPKDHPLTCDHPQLPGLLFL.

The N-terminal stretch at 1 to 20 (MEMLQGLLLLMLLSMGGTWA) is a signal peptide. 6 disulfide bridges follow: C29-C77, C43-C92, C46-C130, C54-C108, C58-C110, and C113-C120. N33 and N50 each carry an N-linked (GlcNAc...) asparagine glycan.

The protein belongs to the glycoprotein hormones subunit beta family. In terms of assembly, heterodimer of a common alpha chain and a unique beta chain which confers biological specificity to thyrotropin, lutropin, follitropin and gonadotropin.

It is found in the secreted. Its function is as follows. Promotes spermatogenesis and ovulation by stimulating the testes and ovaries to synthesize steroids. This chain is Lutropin subunit beta (LHB), found in Pongo pygmaeus (Bornean orangutan).